Consider the following 114-residue polypeptide: UPF0342 protein LCA_0622 (114 aa).

Belongs to the UPF0342 family.

This is UPF0342 protein LCA_0622 from Latilactobacillus sakei subsp. sakei (strain 23K) (Lactobacillus sakei subsp. sakei).